The sequence spans 472 residues: Nuclear hormone receptor family member nhr-2 (472 aa).

Composition is skewed to polar residues over residues 57-83 (TATN…LSQI), 90-112 (NDTI…HNQP), 138-147 (LSSTQSSPDN), and 159-171 (VRRN…SAST). 2 disordered regions span residues 57-112 (TATN…HNQP) and 138-184 (LSST…RTNT). The segment at residues 215–297 (KDRCMVCGDN…VGMNRDNVRV (83 aa)) is a DNA-binding region (nuclear receptor). NR C4-type zinc fingers lie at residues 218–238 (CMVC…CEGC) and 267–285 (CAAN…FAKC).

It belongs to the nuclear hormone receptor family.

It localises to the nucleus. In terms of biological role, orphan nuclear receptor. The sequence is that of Nuclear hormone receptor family member nhr-2 (nhr-2) from Caenorhabditis elegans.